A 152-amino-acid polypeptide reads, in one-letter code: Protein NrdI (152 aa).

This sequence belongs to the NrdI family.

In terms of biological role, probably involved in ribonucleotide reductase function. The chain is Protein NrdI from Mycolicibacterium vanbaalenii (strain DSM 7251 / JCM 13017 / BCRC 16820 / KCTC 9966 / NRRL B-24157 / PYR-1) (Mycobacterium vanbaalenii).